A 364-amino-acid chain; its full sequence is Phospho-N-acetylmuramoyl-pentapeptide-transferase (364 aa).

The next 10 helical transmembrane spans lie at 3–23 (AILFGGGLALLVSLLGTRVAI), 51–71 (TMGGVVIILATVVGYFGAKLI), 80–100 (ALLLLFLLVGTGLVGFVDDFI), 116–136 (MIGLTVVALVFGILSLSSWLE), 154–174 (IGWITLPTVVVLLLIWLIIAA), 185–205 (LDGLATGASVMVFGAYMFVNI), 229–249 (PLDLAVVAAAITGACFGFLWW), 256–276 (IFMGDTGSLALGGALAGLAIL), 281–301 (LLLIILGGLFVMETVSVMLQV), and 341–361 (FWIITGICVAAGLGVFYAEWV).

The protein belongs to the glycosyltransferase 4 family. MraY subfamily. Requires Mg(2+) as cofactor.

Its subcellular location is the cell membrane. The enzyme catalyses UDP-N-acetyl-alpha-D-muramoyl-L-alanyl-gamma-D-glutamyl-meso-2,6-diaminopimeloyl-D-alanyl-D-alanine + di-trans,octa-cis-undecaprenyl phosphate = di-trans,octa-cis-undecaprenyl diphospho-N-acetyl-alpha-D-muramoyl-L-alanyl-D-glutamyl-meso-2,6-diaminopimeloyl-D-alanyl-D-alanine + UMP. It participates in cell wall biogenesis; peptidoglycan biosynthesis. Functionally, catalyzes the initial step of the lipid cycle reactions in the biosynthesis of the cell wall peptidoglycan: transfers peptidoglycan precursor phospho-MurNAc-pentapeptide from UDP-MurNAc-pentapeptide onto the lipid carrier undecaprenyl phosphate, yielding undecaprenyl-pyrophosphoryl-MurNAc-pentapeptide, known as lipid I. The sequence is that of Phospho-N-acetylmuramoyl-pentapeptide-transferase from Nocardioides sp. (strain ATCC BAA-499 / JS614).